Here is a 195-residue protein sequence, read N- to C-terminus: Ribonuclease HII (195 aa).

The RNase H type-2 domain occupies 6–195 (SLIAGVDEVG…KSFISRLKKN (190 aa)). A divalent metal cation-binding residues include Asp12, Glu13, and Asp108.

This sequence belongs to the RNase HII family. Mn(2+) serves as cofactor. Requires Mg(2+) as cofactor.

It localises to the cytoplasm. The catalysed reaction is Endonucleolytic cleavage to 5'-phosphomonoester.. Its function is as follows. Endonuclease that specifically degrades the RNA of RNA-DNA hybrids. In Prochlorococcus marinus (strain NATL2A), this protein is Ribonuclease HII.